Here is a 183-residue protein sequence, read N- to C-terminus: MRAASLFLLFLPAGLLAQGQYDLDPLPPYPDHVQYTHYSEQIENPDYYDYPEMTPRPPEEQFQFQSQQQVQQEVIPAPTLEPGTVETEPTEPGPLDCREEQYPCTRLYSIHKPCKQCLNEVCFYSLRRVYVVNKEICVRTVCAQEELLRADLCRDKFSKCGVLASSGLCQSVAAACARSCGGC.

The first 17 residues, 1-17 (MRAASLFLLFLPAGLLA), serve as a signal peptide directing secretion. The residue at position 18 (Q18) is a Pyrrolidone carboxylic acid. Q20 is covalently cross-linked (Isoglutamyl lysine isopeptide (Gln-Lys) (interchain with K-?)). Residues Y47, Y48, and Y50 each carry the sulfotyrosine modification. In terms of domain architecture, ShKT spans 153–183 (CRDKFSKCGVLASSGLCQSVAAACARSCGGC). Disulfide bonds link C153–C183, C160–C176, and C169–C180.

Belongs to the MFAP family. In terms of assembly, forms a ternary complex with BGN and ELN. Interacts with FBN1 (via N-terminal domain) and FBN2. O-glycosylated; glycans consist of Gal(beta1-3)GalNAc. In terms of processing, forms intermolecular disulfide bonds either with other MAGP-1 molecules or with other components of the microfibrils. Post-translationally, forms transglutaminase cross-links with tropoelastin.

Its subcellular location is the secreted. The protein localises to the extracellular space. It localises to the extracellular matrix. Its function is as follows. Component of the elastin-associated microfibrils. The chain is Microfibrillar-associated protein 2 (MFAP2) from Bos taurus (Bovine).